The following is a 154-amino-acid chain: MLNKRTTEVYALGQHISMSAHKARRVIDQIRGRSYEETLMILELMPYRACYPIFKLVYSAAANASSNMGSNEANLVISKAEVNKGTIMKRLKPRARGRSFAIQKPTCHITIVMKDISLDEYIDTDSIAWSQNKKKDTTMSYYDMYSNGGTWDKK.

The protein belongs to the universal ribosomal protein uL22 family. In terms of assembly, part of the 50S ribosomal subunit.

It localises to the plastid. The protein localises to the chloroplast. Its function is as follows. This protein binds specifically to 23S rRNA. Functionally, the globular domain of the protein is located near the polypeptide exit tunnel on the outside of the subunit, while an extended beta-hairpin is found that lines the wall of the exit tunnel in the center of the 70S ribosome. The chain is Large ribosomal subunit protein uL22c (rpl22) from Helianthus annuus (Common sunflower).